The chain runs to 171 residues: Small ribosomal subunit protein uS13 (171 aa).

A compositionally biased stretch (polar residues) spans 1-11 (MAKGSANNVKV). Disordered regions lie at residues 1 to 24 (MAKG…EKKE) and 144 to 164 (EKGK…GLSI). Basic residues predominate over residues 144–158 (EKGKKVRGQRTRSNG).

The protein belongs to the universal ribosomal protein uS13 family. In terms of assembly, part of the 30S ribosomal subunit. Forms a loose heterodimer with protein S19. Forms two bridges to the 50S subunit in the 70S ribosome.

In terms of biological role, located at the top of the head of the 30S subunit, it contacts several helices of the 16S rRNA. In the 70S ribosome it contacts the 23S rRNA (bridge B1a) and protein L5 of the 50S subunit (bridge B1b), connecting the 2 subunits; these bridges are implicated in subunit movement. In Thermoplasma acidophilum (strain ATCC 25905 / DSM 1728 / JCM 9062 / NBRC 15155 / AMRC-C165), this protein is Small ribosomal subunit protein uS13.